Here is a 218-residue protein sequence, read N- to C-terminus: ATP phosphoribosyltransferase (218 aa).

This sequence belongs to the ATP phosphoribosyltransferase family. Short subfamily. Heteromultimer composed of HisG and HisZ subunits.

It is found in the cytoplasm. It catalyses the reaction 1-(5-phospho-beta-D-ribosyl)-ATP + diphosphate = 5-phospho-alpha-D-ribose 1-diphosphate + ATP. It participates in amino-acid biosynthesis; L-histidine biosynthesis; L-histidine from 5-phospho-alpha-D-ribose 1-diphosphate: step 1/9. Its function is as follows. Catalyzes the condensation of ATP and 5-phosphoribose 1-diphosphate to form N'-(5'-phosphoribosyl)-ATP (PR-ATP). Has a crucial role in the pathway because the rate of histidine biosynthesis seems to be controlled primarily by regulation of HisG enzymatic activity. The chain is ATP phosphoribosyltransferase from Burkholderia mallei (strain ATCC 23344).